Consider the following 249-residue polypeptide: 5'-nucleotidase SurE (249 aa).

A divalent metal cation contacts are provided by aspartate 8, aspartate 9, serine 39, and asparagine 91.

The protein belongs to the SurE nucleotidase family. It depends on a divalent metal cation as a cofactor.

The protein localises to the cytoplasm. The enzyme catalyses a ribonucleoside 5'-phosphate + H2O = a ribonucleoside + phosphate. Nucleotidase that shows phosphatase activity on nucleoside 5'-monophosphates. In Azotobacter vinelandii (strain DJ / ATCC BAA-1303), this protein is 5'-nucleotidase SurE.